The chain runs to 474 residues: Vitamin D-binding protein (474 aa).

The signal sequence occupies residues 1–16 (MKRILVFLLAVAFVHA). Albumin domains are found at residues 17-208 (LERG…QLKH), 209-393 (FSLL…QLTR), and 394-474 (ELSS…TLQS). Disulfide bonds link Cys29/Cys75 and Cys74/Cys83. A glycan (N-linked (GlcNAc...) asparagine) is linked at Asn86. Cystine bridges form between Cys96-Cys112, Cys111-Cys122, Cys145-Cys190, Cys189-Cys198, Cys220-Cys266, Cys265-Cys273, Cys285-Cys299, Cys298-Cys310, Cys334-Cys375, Cys374-Cys383, Cys406-Cys452, and Cys451-Cys461. Asn287 carries an N-linked (GlcNAc...) asparagine glycan.

It belongs to the ALB/AFP/VDB family. In terms of assembly, associates with membrane-bound immunoglobulin on the surface of B-lymphocytes and with IgG Fc receptor on the membranes of T-lymphocytes. Interacts with LRP2; the interaction is required for renal uptake of GC in complex with 25-hydroxyvitamin D3.

It is found in the secreted. Involved in vitamin D transport and storage, scavenging of extracellular G-actin, enhancement of the chemotactic activity of C5 alpha for neutrophils in inflammation and macrophage activation. This Bos taurus (Bovine) protein is Vitamin D-binding protein (GC).